Here is a 314-residue protein sequence, read N- to C-terminus: N-alpha-acetyltransferase 80 (314 aa).

In terms of domain architecture, N-acetyltransferase spans 90–243; it reads LEPVHCRPEL…TTVLRAFSKP (154 aa). Residues Arg113 and 118–121 each bind substrate; that span reads RLHS. Acetyl-CoA-binding positions include 169–171, 177–182, and Gln207; these read VVV and GRGFGR. The interval 260–295 is disordered; sequence VPRSSKGPPLPPPPPLPQSLTASPPPSPEPLPQSPL. Residues 267 to 292 are compositionally biased toward pro residues; the sequence is PPLPPPPPLPQSLTASPPPSPEPLPQ.

This sequence belongs to the acetyltransferase family.

It is found in the cytoplasm. The protein resides in the cytosol. It catalyses the reaction N-terminal L-aspartyl-L-aspartyl-L-aspartyl-[protein] + acetyl-CoA = N-terminal N-acetyl-L-aspartyl-L-aspartyl-L-aspartyl-[protein] + CoA + H(+). The enzyme catalyses N-terminal L-glutamyl-L-glutamyl-L-glutamyl-[protein] + acetyl-CoA = N-terminal N-acetyl-L-glutamyl-L-glutamyl-L-glutamyl-[protein] + CoA + H(+). Functionally, N-alpha-acetyltransferase that specifically mediates the acetylation of the acidic amino terminus of processed forms of beta- and gamma-actin (ACTB and ACTG, respectively). N-terminal acetylation of processed beta- and gamma-actin regulates actin filament depolymerization and elongation. In vivo, preferentially displays N-terminal acetyltransferase activity towards acid N-terminal sequences starting with Asp-Asp-Asp and Glu-Glu-Glu. In vitro, shows high activity towards Met-Asp-Glu-Leu and Met-Asp-Asp-Asp. May act as a tumor suppressor. The protein is N-alpha-acetyltransferase 80 of Mus musculus (Mouse).